A 63-amino-acid polypeptide reads, in one-letter code: Large ribosomal subunit protein uL29 (63 aa).

The protein belongs to the universal ribosomal protein uL29 family.

The protein is Large ribosomal subunit protein uL29 of Idiomarina loihiensis (strain ATCC BAA-735 / DSM 15497 / L2-TR).